A 294-amino-acid polypeptide reads, in one-letter code: Proline iminopeptidase (294 aa).

One can recognise an AB hydrolase-1 domain in the interval 28-278; it reads PLLLLHGGPG…GCGHMPFVQE (251 aa). The active-site Nucleophile is Ser-106. Asp-245 is an active-site residue. The Proton donor role is filled by His-272.

It belongs to the peptidase S33 family. Homotrimer.

It is found in the cell envelope. The enzyme catalyses Release of N-terminal proline from a peptide.. Inhibited by 3,4-DCI, but no significant effect on enzyme activity by pepstatin A, E-64, 1,10-phenanthroline or EDTA. Releases the N-terminal proline from various substrates. Cleaves Pro-betaNA (L-prolyl-beta-naphthylamide) effectively. This Lactobacillus delbrueckii subsp. lactis protein is Proline iminopeptidase (pip).